A 262-amino-acid chain; its full sequence is Sepiapterin reductase (262 aa).

Met1 is subject to N-acetylmethionine. Residues 15–21 (GASRGFG) and 43–44 (RS) each bind NADP(+). Ser46 carries the post-translational modification Phosphoserine. 70–71 (DL) serves as a coordination point for NADP(+). Substrate is bound by residues 158–159 (SL) and Tyr171. Lys175 is an NADP(+) binding site. A Phosphoserine modification is found at Ser196. Gly200 is a substrate binding site. 202 to 207 (LDTDMQ) contacts NADP(+). The residue at position 214 (Ser214) is a Phosphoserine. Asp258 is a binding site for substrate.

Belongs to the sepiapterin reductase family. Homodimer.

The protein localises to the cytoplasm. It carries out the reaction L-erythro-7,8-dihydrobiopterin + NADP(+) = L-sepiapterin + NADPH + H(+). The enzyme catalyses (6R)-L-erythro-5,6,7,8-tetrahydrobiopterin + 2 NADP(+) = 6-pyruvoyl-5,6,7,8-tetrahydropterin + 2 NADPH + 2 H(+). The catalysed reaction is (S)-benzoin + NADP(+) = benzil + NADPH + H(+). Functionally, catalyzes the final one or two reductions in tetra-hydrobiopterin biosynthesis to form 5,6,7,8-tetrahydrobiopterin. The enzyme also catalyzes the reduction of benzil to (S)-benzoin. This Meriones unguiculatus (Mongolian jird) protein is Sepiapterin reductase (SPR).